Reading from the N-terminus, the 378-residue chain is DNA primase small subunit PriS (378 aa).

Catalysis depends on residues D98, D100, and D282.

It belongs to the eukaryotic-type primase small subunit family. Heterodimer of a small subunit (PriS) and a large subunit (PriL). Mg(2+) serves as cofactor. Mn(2+) is required as a cofactor.

In terms of biological role, catalytic subunit of DNA primase, an RNA polymerase that catalyzes the synthesis of short RNA molecules used as primers for DNA polymerase during DNA replication. The small subunit contains the primase catalytic core and has DNA synthesis activity on its own. Binding to the large subunit stabilizes and modulates the activity, increasing the rate of DNA synthesis while decreasing the length of the DNA fragments, and conferring RNA synthesis capability. The DNA polymerase activity may enable DNA primase to also catalyze primer extension after primer synthesis. May also play a role in DNA repair. The protein is DNA primase small subunit PriS of Methanosphaerula palustris (strain ATCC BAA-1556 / DSM 19958 / E1-9c).